The primary structure comprises 335 residues: Pro-cathepsin H (335 aa).

The first 22 residues, 1–22 (MWAVLSLLCAGAWLLGPPACGA), serve as a signal peptide directing secretion. Positions 23–97 (SNLAVSSFEK…DEIRHKYLWS (75 aa)) are excised as a propeptide. N-linked (GlcNAc...) asparagine glycans are attached at residues asparagine 72 and asparagine 101. Disulfide bonds link cysteine 102–cysteine 327, cysteine 138–cysteine 181, cysteine 172–cysteine 214, and cysteine 272–cysteine 322. Positions 107-115 (GNYLRGTGP) are excised as a propeptide. Cysteine 141 is an active-site residue. Asparagine 230 carries an N-linked (GlcNAc...) asparagine glycan. Active-site residues include histidine 281 and asparagine 301.

The protein belongs to the peptidase C1 family. As to quaternary structure, composed of cathepsin H and mini chain; disulfide-linked. Cathepsin H may be split into heavy and light chain. All chains are held together by disulfide bonds.

The protein resides in the lysosome. The enzyme catalyses Hydrolysis of proteins, acting as an aminopeptidase (notably, cleaving Arg-|-Xaa bonds) as well as an endopeptidase.. Important for the overall degradation of proteins in lysosomes. The protein is Pro-cathepsin H (CTSH) of Sus scrofa (Pig).